The following is a 105-amino-acid chain: MAHNHNHDHNHEHQHEVITLVDENGNETLFEILLTIDGREEFGKNYVLLIPAGAEEDEQGEIEIQAYSFTENADGTEGDLQPIPEDSDAEWDMIEEVFNSFLDEE.

The protein belongs to the UPF0473 family.

In Streptococcus agalactiae serotype Ia (strain ATCC 27591 / A909 / CDC SS700), this protein is UPF0473 protein SAK_2028.